A 436-amino-acid polypeptide reads, in one-letter code: AMSH-like protease (436 aa).

An N-acetylmethionine modification is found at M1. 2 positions are modified to phosphoserine: S25 and S242. An MPN domain is found at 269–397; it reads VVLPEDLCHK…IFRLTNAGML (129 aa). Zn(2+) is bound by residues H347, H349, D360, H362, C402, H408, and H410. The JAMM motif signature appears at 347 to 360; sequence HTHPTQTAFLSSVD.

The protein belongs to the peptidase M67C family. Zn(2+) is required as a cofactor. Ubiquitously expressed.

Its activity is regulated as follows. Inhibited by UbV(SP.1), an ubiquitin variant that also inhibits STAMBP. In terms of biological role, zinc metalloprotease that specifically cleaves 'Lys-63'-linked polyubiquitin chains. Acts as a positive regulator of the TORC1 signaling pathway by mediating 'Lys-63'-linked deubiquitination of SESN2, thereby inhibiting SESN2-interaction with the GATOR2 complex. Does not cleave 'Lys-48'-linked polyubiquitin chains. This chain is AMSH-like protease, found in Homo sapiens (Human).